A 242-amino-acid polypeptide reads, in one-letter code: DNA-directed RNA polymerase III subunit rpc5 (242 aa).

2 disordered regions span residues 1-22 (MSFSEDQAMEEAKLRNDETEEQ) and 153-172 (LKAAAGPSNSSSGTSTPRGP). Residues 155-172 (AAAGPSNSSSGTSTPRGP) show a composition bias toward low complexity.

Component of the RNA polymerase III (Pol III) complex consisting of 17 subunits.

It localises to the cytoplasm. Its subcellular location is the nucleus. Functionally, DNA-dependent RNA polymerase catalyzes the transcription of DNA into RNA using the four ribonucleoside triphosphates as substrates. Specific peripheric component of RNA polymerase III which synthesizes small RNAs, such as 5S rRNA and tRNAs. The RPC53/RPC4-RPC37/RPC5 subcomplex is required for terminator recognition and reinitiation. This chain is DNA-directed RNA polymerase III subunit rpc5 (rpc37), found in Schizosaccharomyces pombe (strain 972 / ATCC 24843) (Fission yeast).